A 648-amino-acid chain; its full sequence is Serine/arginine repetitive matrix protein 3 (648 aa).

The segment at 1-44 (MSSTVNNGATGMPAPPDAANGFPQPGASSGSWPRAEEELRAAEP) is disordered. The CWF21 domain maps to 55-98 (LDHERKRRVELKCMELQEMMEEQGYSEEEIRQKVGTFRQMLMEK). Over residues 99-109 (EGVLTREDRPG) the composition is skewed to basic and acidic residues. Disordered regions lie at residues 99-139 (EGVL…DGPV) and 154-648 (YRTK…SGGF). 3 stretches are compositionally biased toward basic residues: residues 168 to 186 (PKKK…KKRR), 199 to 211 (LRKK…KHRR), and 219 to 243 (RRKR…RKRP). Composition is skewed to low complexity over residues 257–276 (SASS…GSPS) and 289–317 (TGSQ…NGGS). Residues 381–409 (ARRRRRRRRRRRSRSSANAPRRRGRRRTK) show a composition bias toward basic residues. 3 stretches are compositionally biased toward low complexity: residues 414–428 (RGSS…SSSD), 461–471 (RPASTSPSPGT), and 493–502 (SWSSSRSPSK). Residues 525–544 (LGRDKDSEGRARHAEAEAAR) show a composition bias toward basic and acidic residues. Over residues 545 to 560 (TRRRSRSYSPIRKRRR) the composition is skewed to basic residues. Residues 579–648 (IPYYRPSPSS…SRSSSESGGF (70 aa)) show a composition bias toward low complexity.

The protein belongs to the CWC21 family.

In terms of biological role, may play a role in regulating breast cancer cell invasiveness. May be involved in RYBP-mediated breast cancer progression. The sequence is that of Serine/arginine repetitive matrix protein 3 (Srrm3) from Mus musculus (Mouse).